The primary structure comprises 613 residues: Dihydroxy-acid dehydratase (613 aa).

Residue Asp81 participates in Mg(2+) binding. Cys122 serves as a coordination point for [2Fe-2S] cluster. Positions 123 and 124 each coordinate Mg(2+). Lys124 is subject to N6-carboxylysine. Position 193 (Cys193) interacts with [2Fe-2S] cluster. A Mg(2+)-binding site is contributed by Glu489. The Proton acceptor role is filled by Ser515.

The protein belongs to the IlvD/Edd family. Homodimer. [2Fe-2S] cluster serves as cofactor. It depends on Mg(2+) as a cofactor.

The enzyme catalyses (2R)-2,3-dihydroxy-3-methylbutanoate = 3-methyl-2-oxobutanoate + H2O. It catalyses the reaction (2R,3R)-2,3-dihydroxy-3-methylpentanoate = (S)-3-methyl-2-oxopentanoate + H2O. Its pathway is amino-acid biosynthesis; L-isoleucine biosynthesis; L-isoleucine from 2-oxobutanoate: step 3/4. It participates in amino-acid biosynthesis; L-valine biosynthesis; L-valine from pyruvate: step 3/4. Functionally, functions in the biosynthesis of branched-chain amino acids. Catalyzes the dehydration of (2R,3R)-2,3-dihydroxy-3-methylpentanoate (2,3-dihydroxy-3-methylvalerate) into 2-oxo-3-methylpentanoate (2-oxo-3-methylvalerate) and of (2R)-2,3-dihydroxy-3-methylbutanoate (2,3-dihydroxyisovalerate) into 2-oxo-3-methylbutanoate (2-oxoisovalerate), the penultimate precursor to L-isoleucine and L-valine, respectively. In Pseudomonas putida (strain W619), this protein is Dihydroxy-acid dehydratase.